Reading from the N-terminus, the 120-residue chain is Large ribosomal subunit protein uL18 (120 aa).

The protein belongs to the universal ribosomal protein uL18 family. In terms of assembly, part of the 50S ribosomal subunit; part of the 5S rRNA/L5/L18/L25 subcomplex. Contacts the 5S and 23S rRNAs.

Functionally, this is one of the proteins that bind and probably mediate the attachment of the 5S RNA into the large ribosomal subunit, where it forms part of the central protuberance. The polypeptide is Large ribosomal subunit protein uL18 (Allorhizobium ampelinum (strain ATCC BAA-846 / DSM 112012 / S4) (Agrobacterium vitis (strain S4))).